We begin with the raw amino-acid sequence, 69 residues long: Conotoxin Eb6.1 (69 aa).

Residues 1–17 (VLIIAVLFLTACQLTTA) form the signal peptide. Positions 18–41 (ETYSRGRQKHRARRSTDKNSKWTR) are excised as a propeptide. Disulfide bonds link cysteine 43–cysteine 57, cysteine 50–cysteine 61, and cysteine 56–cysteine 68.

Belongs to the conotoxin O1 superfamily. In terms of tissue distribution, expressed by the venom duct.

The protein resides in the secreted. The chain is Conotoxin Eb6.1 (E1) from Conus ebraeus (Hebrew cone).